The primary structure comprises 391 residues: Alanine racemase (391 aa).

The active-site Proton acceptor; specific for D-alanine is the K46. N6-(pyridoxal phosphate)lysine is present on K46. R148 contacts substrate. The active-site Proton acceptor; specific for L-alanine is Y283. M331 lines the substrate pocket.

This sequence belongs to the alanine racemase family. Requires pyridoxal 5'-phosphate as cofactor.

It catalyses the reaction L-alanine = D-alanine. It functions in the pathway amino-acid biosynthesis; D-alanine biosynthesis; D-alanine from L-alanine: step 1/1. Catalyzes the interconversion of L-alanine and D-alanine. May also act on other amino acids. The protein is Alanine racemase (alr) of Streptomyces coelicolor (strain ATCC BAA-471 / A3(2) / M145).